The chain runs to 651 residues: Bromodomain-containing protein 7 (651 aa).

A Glycyl lysine isopeptide (Lys-Gly) (interchain with G-Cter in SUMO2) cross-link involves residue lysine 21. A disordered region spans residues 34 to 103 (VTELSTGSSG…RDRAENEVDR (70 aa)). Residues 35 to 45 (TELSTGSSGHD) are compositionally biased toward polar residues. Residues 47 to 57 (SLFEDRSDHDK) are compositionally biased toward basic and acidic residues. Over residues 58–69 (HKDRKRKKRKKG) the composition is skewed to basic residues. The Nuclear localization signal signature appears at 65 to 96 (KRKKGEKQAPGEEKGRKRRRVKEDKKKRDRDR). A compositionally biased stretch (basic and acidic residues) spans 70–103 (EKQAPGEEKGRKRRRVKEDKKKRDRDRAENEVDR). Glycyl lysine isopeptide (Lys-Gly) (interchain with G-Cter in SUMO2) cross-links involve residues lysine 127, lysine 186, lysine 197, lysine 201, lysine 212, and lysine 241. The 105-residue stretch at 131-235 (VEQTPLQEAL…HSGMKILSQE (105 aa)) folds into the Bromo domain. The segment at 252 to 316 (KTRKQKERTD…RSSNSEREHE (65 aa)) is disordered. A phosphoserine mark is found at serine 279 and serine 289. A compositionally biased stretch (basic and acidic residues) spans 290-316 (PAKDNKRKDKDVLEDKWRSSNSEREHE). Lysine 305 is covalently cross-linked (Glycyl lysine isopeptide (Lys-Gly) (interchain with G-Cter in SUMO2)). Residue lysine 328 is modified to N6-acetyllysine. Lysine 344 is covalently cross-linked (Glycyl lysine isopeptide (Lys-Gly) (interchain with G-Cter in SUMO2)). Serine 380 bears the Phosphoserine mark. A Glycyl lysine isopeptide (Lys-Gly) (interchain with G-Cter in SUMO2) cross-link involves residue lysine 389. Phosphoserine occurs at positions 475, 482, and 483. Positions 536–567 (SEEAEVFQRKLDETTRLLRELQEAQNERLSTR) form a coiled coil. At serine 621 the chain carries Phosphoserine.

As to quaternary structure, interacts with IRF2 and HNRPUL1. Interacts (via N-terminus) with TP53. Interacts (via C-terminus) with EP300. Interacts with BRCA1. Interacts (via bromo domain) with histone H3 (via N-terminus) acetylated at 'Lys-14' (H3K14ac). Has low affinity for histone H3 acetylated at 'Lys-9' (H3K9ac). Has the highest affinity for histone H3 that is acetylated both at 'Lys-9' (H3K9ac) and at 'Lys-14' (H3K14ac). Has very low affinity for non-acetylated histone H3. Interacts (via bromo domain) with histone H4 (via N-terminus) acetylated at 'Lys-8' (H3K8ac) (in vitro). Interacts with TRIM24, PTPN13 and DVL1. Identified in a complex with SMARCA4/BRG1, SMARCC1/BAF155, SMARCE1/BAF57, DPF2/BAF45D and ARID2, subunits of the SWI/SNF-B (PBAF) chromatin remodeling complex. As to expression, ubiquitous.

The protein localises to the nucleus. The protein resides in the chromosome. In terms of biological role, acts both as coactivator and as corepressor. May play a role in chromatin remodeling. Transcriptional corepressor that down-regulates the expression of target genes. Binds to target promoters, leading to increased histone H3 acetylation at 'Lys-9' (H3K9ac). Binds to the ESR1 promoter. Recruits BRCA1 and POU2F1 to the ESR1 promoter. Coactivator for TP53-mediated activation of transcription of a set of target genes. Required for TP53-mediated cell-cycle arrest in response to oncogene activation. Promotes acetylation of TP53 at 'Lys-382', and thereby promotes efficient recruitment of TP53 to target promoters. Inhibits cell cycle progression from G1 to S phase. Activator of the Wnt signaling pathway in a DVL1-dependent manner by negatively regulating the GSK3B phosphotransferase activity. Induces dephosphorylation of GSK3B at 'Tyr-216'. Down-regulates TRIM24-mediated activation of transcriptional activation by AR. In Mus musculus (Mouse), this protein is Bromodomain-containing protein 7 (Brd7).